The following is a 307-amino-acid chain: Ribosomal RNA small subunit methyltransferase H (307 aa).

Residues 32 to 34 (GGH), aspartate 52, phenylalanine 78, aspartate 100, and glutamine 107 each bind S-adenosyl-L-methionine.

This sequence belongs to the methyltransferase superfamily. RsmH family.

It is found in the cytoplasm. It catalyses the reaction cytidine(1402) in 16S rRNA + S-adenosyl-L-methionine = N(4)-methylcytidine(1402) in 16S rRNA + S-adenosyl-L-homocysteine + H(+). Its function is as follows. Specifically methylates the N4 position of cytidine in position 1402 (C1402) of 16S rRNA. The sequence is that of Ribosomal RNA small subunit methyltransferase H from Coxiella burnetii (strain CbuK_Q154) (Coxiella burnetii (strain Q154)).